Here is a 117-residue protein sequence, read N- to C-terminus: Large ribosomal subunit protein bL20 (117 aa).

It belongs to the bacterial ribosomal protein bL20 family.

Functionally, binds directly to 23S ribosomal RNA and is necessary for the in vitro assembly process of the 50S ribosomal subunit. It is not involved in the protein synthesizing functions of that subunit. The chain is Large ribosomal subunit protein bL20 from Campylobacter lari (strain RM2100 / D67 / ATCC BAA-1060).